The chain runs to 119 residues: Large ribosomal subunit protein bL20 (119 aa).

Belongs to the bacterial ribosomal protein bL20 family.

Its function is as follows. Binds directly to 23S ribosomal RNA and is necessary for the in vitro assembly process of the 50S ribosomal subunit. It is not involved in the protein synthesizing functions of that subunit. In Bacillus licheniformis (strain ATCC 14580 / DSM 13 / JCM 2505 / CCUG 7422 / NBRC 12200 / NCIMB 9375 / NCTC 10341 / NRRL NRS-1264 / Gibson 46), this protein is Large ribosomal subunit protein bL20.